The sequence spans 29 residues: Conotoxin SIVC (29 aa).

A1 carries the post-translational modification N-acetylalanine; partial. A 4-hydroxyproline modification is found at P2. Residues T7 and T9 are each glycosylated (O-linked (HexNAc...) threonine). 2 positions are modified to 4-hydroxyproline: P18 and P22. Residue C29 is modified to Cysteine amide.

The protein belongs to the conotoxin A superfamily. In terms of processing, O-linked glycans consist of Hex4-HexNAc2 hexasaccharides. Post-translationally, N-terminus is found to be free and N-acetylated, depending on the fraction studied. Contains 3 disulfide bonds. In terms of tissue distribution, expressed by the venom duct. Low expression in the distal venom duct sections.

Its subcellular location is the secreted. Its function is as follows. Probable neurotoxin with ion channel inhibitor activity. The chain is Conotoxin SIVC from Conus striatus (Striated cone).